The primary structure comprises 410 residues: LL-diaminopimelate aminotransferase (410 aa).

The substrate site is built by Tyr-15 and Gly-42. Residues Tyr-72, 108-109 (AK), Tyr-132, Asn-188, Tyr-219, and 247-249 (SFS) contribute to the pyridoxal 5'-phosphate site. Residues Lys-109, Tyr-132, and Asn-188 each coordinate substrate. At Lys-250 the chain carries N6-(pyridoxal phosphate)lysine. 2 residues coordinate pyridoxal 5'-phosphate: Arg-258 and Asn-293. Substrate contacts are provided by Asn-293 and Arg-389.

It belongs to the class-I pyridoxal-phosphate-dependent aminotransferase family. LL-diaminopimelate aminotransferase subfamily. Homodimer. The cofactor is pyridoxal 5'-phosphate.

It catalyses the reaction (2S,6S)-2,6-diaminopimelate + 2-oxoglutarate = (S)-2,3,4,5-tetrahydrodipicolinate + L-glutamate + H2O + H(+). It participates in amino-acid biosynthesis; L-lysine biosynthesis via DAP pathway; LL-2,6-diaminopimelate from (S)-tetrahydrodipicolinate (aminotransferase route): step 1/1. Involved in the synthesis of meso-diaminopimelate (m-DAP or DL-DAP), required for both lysine and peptidoglycan biosynthesis. Catalyzes the direct conversion of tetrahydrodipicolinate to LL-diaminopimelate. The polypeptide is LL-diaminopimelate aminotransferase (Bacteroides fragilis (strain YCH46)).